A 291-amino-acid polypeptide reads, in one-letter code: Homoserine kinase (291 aa).

Position 80–90 (80–90 (RPASGLGSSAA)) interacts with ATP.

This sequence belongs to the GHMP kinase family. Homoserine kinase subfamily.

It localises to the cytoplasm. The catalysed reaction is L-homoserine + ATP = O-phospho-L-homoserine + ADP + H(+). Its pathway is amino-acid biosynthesis; L-threonine biosynthesis; L-threonine from L-aspartate: step 4/5. Catalyzes the ATP-dependent phosphorylation of L-homoserine to L-homoserine phosphate. The protein is Homoserine kinase of Haloarcula marismortui (strain ATCC 43049 / DSM 3752 / JCM 8966 / VKM B-1809) (Halobacterium marismortui).